We begin with the raw amino-acid sequence, 172 residues long: Translation initiation factor IF-3 (172 aa).

This sequence belongs to the IF-3 family. Monomer.

The protein localises to the cytoplasm. In terms of biological role, IF-3 binds to the 30S ribosomal subunit and shifts the equilibrium between 70S ribosomes and their 50S and 30S subunits in favor of the free subunits, thus enhancing the availability of 30S subunits on which protein synthesis initiation begins. This is Translation initiation factor IF-3 from Bartonella henselae (strain ATCC 49882 / DSM 28221 / CCUG 30454 / Houston 1) (Rochalimaea henselae).